Here is a 551-residue protein sequence, read N- to C-terminus: Solute carrier family 22 member 6 (551 aa).

The Cytoplasmic portion of the chain corresponds to 1–23 (MAFNDLLKQVGGVGRFQRIQVTL). Residues 24–44 (VVLPLLLMASHNTLQNFTAAI) form a helical membrane-spanning segment. Over 45–135 (PPHHCRPPAH…LVCSHRALRQ (91 aa)) the chain is Extracellular. N-linked (GlcNAc...) asparagine glycans are attached at residues N56, N92, and N113. Residues 136–156 (LGQSLYMAGVLIGAMVFGYLA) traverse the membrane as a helical segment. The Cytoplasmic segment spans residues 157–164 (DRLGRRKV). Residues 165 to 187 (LILNYLQTAVSGTCAAFSPNFTV) form a helical membrane-spanning segment. The Extracellular segment spans residues 188–195 (YCTFRLLS). Residues 196-216 (GMSLAGIALNCMTLNVEWMPI) form a helical membrane-spanning segment. The Cytoplasmic portion of the chain corresponds to 217–224 (HTRAYVGT). The chain crosses the membrane as a helical span at residues 225-245 (LAGYVYSTGQFLLAGVAYAVP). Residues 246–248 (HWR) lie on the Extracellular side of the membrane. Residues 249–269 (YLQLLVSVPFFAFFVYSWFFI) traverse the membrane as a helical segment. Topologically, residues 270 to 337 (ESARWYSTPG…ELLRCPALRH (68 aa)) are cytoplasmic. The helical transmembrane segment at 338 to 358 (LFLCLSLLWFATSFAYYGLVM) threads the bilayer. The Extracellular portion of the chain corresponds to 359–368 (DLQGFGVSIY). Residues 369–389 (LIQVIFGAVDLPAKLVCFLVI) form a helical membrane-spanning segment. Over 390-395 (NSLGRR) the chain is Cytoplasmic. Residues 396 to 416 (PAQMASLLLAGICILVNGVIP) traverse the membrane as a helical segment. At 417-425 (RDQSIVRTS) the chain is on the extracellular side. The helical transmembrane segment at 426–446 (LAVLGKGCLASSFNCIFLYTG) threads the bilayer. At 447-484 (ELYPTMIRQTGLGMGSTMARVGSIVSPLVSMTSELYPS) the chain is on the cytoplasmic side. The helical transmembrane segment at 485-505 (LPLFIYGAVPVAASAATALLP) threads the bilayer. Over 506-551 (ETLGQPLPDTVQDLESRRRGKPRRQQQEQQKQMVPLQASVQEKNGL) the chain is Extracellular. A disordered region spans residues 520–551 (ESRRRGKPRRQQQEQQKQMVPLQASVQEKNGL).

It belongs to the major facilitator (TC 2.A.1) superfamily. Organic cation transporter (TC 2.A.1.19) family. Post-translationally, glycosylated. Glycosylation is necessary for proper targeting of the transporter to the plasma membrane.

The protein localises to the basolateral cell membrane. The protein resides in the basal cell membrane. It catalyses the reaction (6R)-L-erythro-5,6,7,8-tetrahydrobiopterin(out) + a dicarboxylate(in) = (6R)-L-erythro-5,6,7,8-tetrahydrobiopterin(in) + a dicarboxylate(out). The enzyme catalyses L-erythro-7,8-dihydrobiopterin(out) + a dicarboxylate(in) = L-erythro-7,8-dihydrobiopterin(in) + a dicarboxylate(out). The catalysed reaction is L-sepiapterin(out) + a dicarboxylate(in) = L-sepiapterin(in) + a dicarboxylate(out). It carries out the reaction prostaglandin F2alpha(out) + a dicarboxylate(in) = prostaglandin F2alpha(in) + a dicarboxylate(out). It catalyses the reaction prostaglandin E2(out) + a dicarboxylate(in) = prostaglandin E2(in) + a dicarboxylate(out). The enzyme catalyses 3',5'-cyclic AMP(out) + a dicarboxylate(in) = 3',5'-cyclic AMP(in) + a dicarboxylate(out). The catalysed reaction is 3',5'-cyclic GMP(out) + a dicarboxylate(in) = 3',5'-cyclic GMP(in) + a dicarboxylate(out). It carries out the reaction urate(out) + a dicarboxylate(in) = urate(in) + a dicarboxylate(out). It catalyses the reaction kynurenate(out) + glutarate(in) = kynurenate(in) + glutarate(out). The enzyme catalyses (indol-3-yl)acetate(out) + a dicarboxylate(in) = (indol-3-yl)acetate(in) + a dicarboxylate(out). The catalysed reaction is indoxyl sulfate(out) + a dicarboxylate(in) = indoxyl sulfate(in) + a dicarboxylate(out). It carries out the reaction N-benzoylglycine(out) + a dicarboxylate(in) = N-benzoylglycine(in) + a dicarboxylate(out). It catalyses the reaction 3-carboxy-4-methyl-5-propyl-2-furanpropanoate(out) + a dicarboxylate(in) = 3-carboxy-4-methyl-5-propyl-2-furanpropanoate(in) + a dicarboxylate(out). Functionally, secondary active transporter that functions as a Na(+)-independent organic anion (OA)/dicarboxylate antiporter where the uptake of one molecule of OA into the cell is coupled with an efflux of one molecule of intracellular dicarboxylate such as 2-oxoglutarate or glutarate. Mediates the uptake of OA across the basolateral side of proximal tubule epithelial cells, thereby contributing to the renal elimination of endogenous OA from the systemic circulation into the urine. Functions as a biopterin transporters involved in the uptake and the secretion of coenzymes tetrahydrobiopterin (BH4), dihydrobiopterin (BH2) and sepiapterin to urine, thereby determining baseline levels of blood biopterins. Transports prostaglandin E2 (PGE2) and prostaglandin F2-alpha (PGF2-alpha) and may contribute to their renal excretion. Also mediates the uptake of cyclic nucleotides such as cAMP and cGMP. Involved in the transport of neuroactive tryptophan metabolites kynurenate (KYNA) and xanthurenate (XA) and may contribute to their secretion from the brain. May transport glutamate. Also involved in the disposition of uremic toxins and potentially toxic xenobiotics by the renal organic anion secretory pathway, helping reduce their undesired toxicological effects on the body. Uremic toxins include the indoxyl sulfate (IS), hippurate/N-benzoylglycine (HA), indole acetate (IA), 3-carboxy-4- methyl-5-propyl-2-furanpropionate (CMPF) and urate. Xenobiotics include the mycotoxin ochratoxin (OTA). May also contribute to the transport of organic compounds in testes across the blood-testis-barrier. May also work as a bidirectional OA/dicarboxylate exchanger. In Oryctolagus cuniculus (Rabbit), this protein is Solute carrier family 22 member 6.